Reading from the N-terminus, the 493-residue chain is Cytochrome P450 2E1 (493 aa).

298–303 is a substrate binding site; the sequence is FAGTET. Position 437 (Cys437) interacts with heme.

The protein belongs to the cytochrome P450 family. As to quaternary structure, interacts with chaperones HSP70 and HSP90; this interaction is required for initial targeting to mitochondria. It depends on heme as a cofactor.

Its subcellular location is the endoplasmic reticulum membrane. The protein localises to the microsome membrane. It is found in the mitochondrion inner membrane. The catalysed reaction is an organic molecule + reduced [NADPH--hemoprotein reductase] + O2 = an alcohol + oxidized [NADPH--hemoprotein reductase] + H2O + H(+). It catalyses the reaction (5Z,8Z,11Z)-eicosatrienoate + reduced [NADPH--hemoprotein reductase] + O2 = 19-hydroxy-(5Z,8Z,11Z)-eicosatrienoate + oxidized [NADPH--hemoprotein reductase] + H2O + H(+). The enzyme catalyses (5Z,8Z,11Z,14Z,17Z)-eicosapentaenoate + reduced [NADPH--hemoprotein reductase] + O2 = 19-hydroxy-(5Z,8Z,11Z,14Z,17Z)-eicosapentaenoate + oxidized [NADPH--hemoprotein reductase] + H2O + H(+). It carries out the reaction (4Z,7Z,10Z,13Z,16Z,19Z)-docosahexaenoate + reduced [NADPH--hemoprotein reductase] + O2 = 21-hydroxy-(4Z,7Z,10Z,13Z,16Z,19Z)-docosahexaenoate + oxidized [NADPH--hemoprotein reductase] + H2O + H(+). The catalysed reaction is dodecanoate + reduced [NADPH--hemoprotein reductase] + O2 = 11-hydroxydodecanoate + oxidized [NADPH--hemoprotein reductase] + H2O + H(+). It catalyses the reaction tetradecanoate + reduced [NADPH--hemoprotein reductase] + O2 = 13-hydroxytetradecanoate + oxidized [NADPH--hemoprotein reductase] + H2O + H(+). The enzyme catalyses 4-nitrophenol + NADPH + O2 + H(+) = 4-nitrocatechol + NADP(+) + H2O. Its pathway is lipid metabolism; fatty acid metabolism. Its activity is regulated as follows. The omega-1 hydroxylase activity is stimulated by cytochrome b5. A cytochrome P450 monooxygenase involved in the metabolism of fatty acids. Mechanistically, uses molecular oxygen inserting one oxygen atom into a substrate, and reducing the second into a water molecule, with two electrons provided by NADPH via cytochrome P450 reductase (NADPH--hemoprotein reductase). Catalyzes the hydroxylation of carbon-hydrogen bonds. Hydroxylates fatty acids specifically at the omega-1 position displaying the highest catalytic activity for saturated fatty acids. May be involved in the oxidative metabolism of xenobiotics. This chain is Cytochrome P450 2E1, found in Homo sapiens (Human).